The following is a 199-amino-acid chain: Ras-related protein Rab-7b (199 aa).

GTP is bound by residues 15–22, 34–40, 63–67, 124–127, and 154–155; these read GALGVGKT, FEEYQTT, DTGGQ, NKID, and AK. Short sequence motifs (switch) lie at residues 28 to 41 and 67 to 82; these read YVHK…QTTL and QERF…KGSD. The residue at position 186 (S186) is a Phosphoserine. Residues C198 and C199 are each lipidated (S-geranylgeranyl cysteine).

It belongs to the small GTPase superfamily. Rab family.

It is found in the late endosome. It localises to the lysosome. Its subcellular location is the golgi apparatus. The protein localises to the trans-Golgi network. The protein resides in the cytoplasmic vesicle. It is found in the phagosome. It localises to the phagosome membrane. Its function is as follows. Controls vesicular trafficking from endosomes to the trans-Golgi network (TGN). Acts as a negative regulator of TLR9 signaling and can suppress TLR9-triggered TNFA, IL6, and IFNB production in macrophages by promoting TLR9 lysosomal degradation. Also negatively regulates TLR4 signaling in macrophages by promoting lysosomal degradation of TLR4. Promotes megakaryocytic differentiation by increasing NF-kappa-B-dependent IL6 production and subsequently enhancing the association of STAT3 with GATA1. Not involved in the regulation of the EGF- and EGFR degradation pathway. In Mus musculus (Mouse), this protein is Ras-related protein Rab-7b (Rab7b).